The following is a 739-amino-acid chain: Sulfate transporter (739 aa).

Residues 1-27 (MSSESKEQHNVSPRDSAEGNDSYPSGI) are disordered. Ser12 and Ser16 each carry phosphoserine. The next 2 helical transmembrane spans lie at 112–132 (VMSGLIVGILLVPQSIAYSLL) and 137–157 (PVYGLYTSFFASIIYFLLGTS). N-linked (GlcNAc...) asparagine glycosylation is found at Asn199 and Asn205. The next 2 helical transmembrane spans lie at 219–239 (IMVGSTVTFIAGVYQVAMGFF) and 242–262 (GFVSVYLSDALLSGFVTGASF). An N-linked (GlcNAc...) asparagine glycan is attached at Asn357. Transmembrane regions (helical) follow at residues 378–398 (LIPSVAVDAIAISIIGFAITV), 420–440 (AIGFCNIIPSFFHCFTTSAAL), 455–475 (LSGVVTALVLLLVLLVIAPLF), and 524–544 (LLSTEIGLLVGVCFSIFCVIL). An STAS domain is found at 568–719 (AYKNLQIKPG…YSVYEAMAFA (152 aa)).

It belongs to the SLC26A/SulP transporter (TC 2.A.53) family. Post-translationally, N-glycosylated. Ubiquitously expressed.

It is found in the cell membrane. The protein localises to the apical cell membrane. It catalyses the reaction oxalate(in) + sulfate(out) = oxalate(out) + sulfate(in). The enzyme catalyses sulfate(out) + 2 chloride(in) = sulfate(in) + 2 chloride(out). The catalysed reaction is oxalate(out) + 2 chloride(in) = oxalate(in) + 2 chloride(out). It carries out the reaction bromide(in) + chloride(out) = bromide(out) + chloride(in). It catalyses the reaction nitrate(in) + chloride(out) = nitrate(out) + chloride(in). The enzyme catalyses iodide(in) + chloride(out) = iodide(out) + chloride(in). With respect to regulation, an extracellular acidic pH inhibits chloride-sulfate and chloride-oxalate exchange activity whereas an intracellular acidic pH activates chloride-sulfate exchange with no effect on chloride-oxalate exchange activity. In terms of biological role, sulfate transporter which mediates sulfate uptake into chondrocytes in order to maintain adequate sulfation of proteoglycans which is needed for cartilage development. Mediates electroneutral anion exchange of sulfate ions for oxalate ions and of sulfate and oxalate ions for chloride ions. Mediates exchange of sulfate and oxalate ions for hydroxyl ions and of chloride ions for bromide, iodide and nitrate ions. The coupling of sulfate transport to both hydroxyl and chloride ions likely serves to ensure transport at both acidic pH when most sulfate uptake is mediated by sulfate-hydroxide exchange and alkaline pH when most sulfate uptake is mediated by sulfate-chloride exchange. Essential for chondrocyte proliferation, differentiation and cell size expansion. This Homo sapiens (Human) protein is Sulfate transporter (SLC26A2).